Here is a 345-residue protein sequence, read N- to C-terminus: Methionine import ATP-binding protein MetN (345 aa).

Residues I2–I241 form the ABC transporter domain. G38–S45 provides a ligand contact to ATP.

It belongs to the ABC transporter superfamily. Methionine importer (TC 3.A.1.24) family. In terms of assembly, the complex is composed of two ATP-binding proteins (MetN), two transmembrane proteins (MetI) and a solute-binding protein (MetQ).

It is found in the cell inner membrane. It catalyses the reaction L-methionine(out) + ATP + H2O = L-methionine(in) + ADP + phosphate + H(+). The catalysed reaction is D-methionine(out) + ATP + H2O = D-methionine(in) + ADP + phosphate + H(+). Part of the ABC transporter complex MetNIQ involved in methionine import. Responsible for energy coupling to the transport system. The protein is Methionine import ATP-binding protein MetN of Histophilus somni (strain 129Pt) (Haemophilus somnus).